Here is a 164-residue protein sequence, read N- to C-terminus: Phosphopantetheine adenylyltransferase (164 aa).

Ser-9 contributes to the substrate binding site. Residues 9 to 10 and His-17 each bind ATP; that span reads SF. Substrate-binding residues include Lys-41, Val-78, and Arg-92. ATP-binding positions include 93-95, Glu-103, and 128-134; these read GLR and SRPITAT.

The protein belongs to the bacterial CoaD family. In terms of assembly, homohexamer. Requires Mg(2+) as cofactor.

The protein localises to the cytoplasm. It catalyses the reaction (R)-4'-phosphopantetheine + ATP + H(+) = 3'-dephospho-CoA + diphosphate. It functions in the pathway cofactor biosynthesis; coenzyme A biosynthesis; CoA from (R)-pantothenate: step 4/5. Reversibly transfers an adenylyl group from ATP to 4'-phosphopantetheine, yielding dephospho-CoA (dPCoA) and pyrophosphate. The polypeptide is Phosphopantetheine adenylyltransferase (Agrobacterium fabrum (strain C58 / ATCC 33970) (Agrobacterium tumefaciens (strain C58))).